A 450-amino-acid polypeptide reads, in one-letter code: Tubulin alpha-1 chain (450 aa).

GTP is bound by residues Gln-11, Glu-71, Gly-144, Thr-145, Thr-179, Asn-206, and Asn-228. Glu-71 is a Mg(2+) binding site. Glu-254 is a catalytic residue.

This sequence belongs to the tubulin family. As to quaternary structure, dimer of alpha and beta chains. A typical microtubule is a hollow water-filled tube with an outer diameter of 25 nm and an inner diameter of 15 nM. Alpha-beta heterodimers associate head-to-tail to form protofilaments running lengthwise along the microtubule wall with the beta-tubulin subunit facing the microtubule plus end conferring a structural polarity. Microtubules usually have 13 protofilaments but different protofilament numbers can be found in some organisms and specialized cells. The cofactor is Mg(2+). Post-translationally, undergoes a tyrosination/detyrosination cycle, the cyclic removal and re-addition of a C-terminal tyrosine residue by the enzymes tubulin tyrosine carboxypeptidase (TTCP) and tubulin tyrosine ligase (TTL), respectively.

The protein resides in the cytoplasm. The protein localises to the cytoskeleton. The enzyme catalyses GTP + H2O = GDP + phosphate + H(+). Functionally, tubulin is the major constituent of microtubules, a cylinder consisting of laterally associated linear protofilaments composed of alpha- and beta-tubulin heterodimers. Microtubules grow by the addition of GTP-tubulin dimers to the microtubule end, where a stabilizing cap forms. Below the cap, tubulin dimers are in GDP-bound state, owing to GTPase activity of alpha-tubulin. In Hordeum vulgare (Barley), this protein is Tubulin alpha-1 chain (TUBA1).